Here is a 297-residue protein sequence, read N- to C-terminus: MTPRVSDPFTGQSIESARRTLAARLRSAQLEEAELDARILLGAALGLDLTGLIAQAARLLTEAEASRIAQHAQRRIAGEPVARILGTREFWGLPFRLSDATLVPRPDTETVVERALELFREQKATQQPRIADIGTGSGAILLALLHDIPGAFGVGTDLSLNALETARGNAVTLGLADRSAFVACSYLAALRGPFDLIVSNPPYIPSAEIPKLSLEVREHDPHLALDGGNDGYDAYRALIPQAAERLAPGGALIVEAGQGQARNIETLLTAAALVVDRPPKADLAGIPRAVSARKMPP.

S-adenosyl-L-methionine-binding positions include 134-138 (GTGSG), aspartate 157, and asparagine 200. Residue 200 to 203 (NPPY) participates in substrate binding.

Belongs to the protein N5-glutamine methyltransferase family. PrmC subfamily.

It catalyses the reaction L-glutaminyl-[peptide chain release factor] + S-adenosyl-L-methionine = N(5)-methyl-L-glutaminyl-[peptide chain release factor] + S-adenosyl-L-homocysteine + H(+). Methylates the class 1 translation termination release factors RF1/PrfA and RF2/PrfB on the glutamine residue of the universally conserved GGQ motif. The chain is Release factor glutamine methyltransferase from Bradyrhizobium diazoefficiens (strain JCM 10833 / BCRC 13528 / IAM 13628 / NBRC 14792 / USDA 110).